Reading from the N-terminus, the 266-residue chain is Undecaprenyl-diphosphatase (266 aa).

A run of 8 helical transmembrane segments spans residues isoleucine 4–serine 24, leucine 39–tyrosine 59, leucine 86–isoleucine 106, methionine 112–leucine 132, isoleucine 145–serine 165, lysine 182–leucine 202, isoleucine 210–glycine 230, and leucine 246–isoleucine 266.

Belongs to the UppP family.

Its subcellular location is the cell inner membrane. It catalyses the reaction di-trans,octa-cis-undecaprenyl diphosphate + H2O = di-trans,octa-cis-undecaprenyl phosphate + phosphate + H(+). In terms of biological role, catalyzes the dephosphorylation of undecaprenyl diphosphate (UPP). Confers resistance to bacitracin. This chain is Undecaprenyl-diphosphatase, found in Borreliella burgdorferi (strain ATCC 35210 / DSM 4680 / CIP 102532 / B31) (Borrelia burgdorferi).